The following is an 80-amino-acid chain: Inner kinetochore subunit MHF2 (80 aa).

Belongs to the CENP-X/MHF2 family. The MHF histone-fold complex is a heterotetramer of 2 MHF1-MHF2 heterodimers. Together with MPH1/FANCM, forms the FANCM-MHF complex. Component of the inner kinetochore constitutive centromere-associated network (CCAN) (also known as central kinetochore CTF19 complex in yeast), which is composed of at least AME1, CHL4, CNN1, CTF3, CTF19, IML3, MCM16, MCM21, MCM22, MHF1, MHF2, MIF2, NKP1, NKP2, OKP1 and WIP1.

DNA-binding component of a FANCM-MHF complex involved in DNA damage repair and genome maintenance. FANCM-MHF promotes gene conversion at blocked replication forks, probably by reversal of the stalled fork. Component of the kinetochore, a multiprotein complex that assembles on centromeric DNA and attaches chromosomes to spindle microtubules, mediating chromosome segregation and sister chromatid segregation during meiosis and mitosis. Component of the inner kinetochore constitutive centromere-associated network (CCAN), which serves as a structural platform for outer kinetochore assembly. In Saccharomyces cerevisiae (strain ATCC 204508 / S288c) (Baker's yeast), this protein is Inner kinetochore subunit MHF2.